The sequence spans 273 residues: MGKAALQDPHGGIWYFAYGSNLRLSVLENRGIKALDIKAVIVPSHYLTFDIFGIPYAEPSFASVAPFAREKKTTLRLGDSPASRDVPPVQGLAYLLNPRDYRQLVISEGGGVAYDEVEVHASILDKDGKPDPGATLIARTLQAKYPWRPNGAPSARYLGLISTGCKQNEPLTAYSDYIDSLPAYEPPTSLHAKVGGLLFLMFWRPPLRLLIRLIRVNTDQDGHCPQWLGWIILTLYGLMWSYHDNIHSKIWGRGDGRKLHFEETPAKEVPVRH.

A helical membrane pass occupies residues 227–243 (WLGWIILTLYGLMWSYH).

The protein belongs to the class-I pyridoxal-phosphate-dependent aminotransferase family.

Its subcellular location is the membrane. The enzyme catalyses an alpha-(gamma-L-glutamyl)-L-amino acid = 5-oxo-L-proline + an L-alpha-amino acid. It participates in mycotoxin biosynthesis. In terms of biological role, gamma-glutamyl cyclotransferase-like protein; part of the gene cluster that mediates the biosynthesis of gliotoxin, a member of the epipolythiodioxopiperazine (ETP) class of toxins characterized by a disulfide bridged cyclic dipeptide. The first step in gliotoxin biosynthesis is the condensation of serine and phenylalanine to form the cyclo-L-phenylalanyl-L-serine diketopiperazine (DKP) by the NRPS gliP. GliP is also able to produce the DKP cyclo-L-tryptophanyl-L-serine, suggesting that the substrate specificity of the first adenylation (A) domain in gliP is sufficiently relaxed to accommodate both L-Phe and L-Trp. The cytochrome P450 monooxygenase gliC has been shown to catalyze the subsequent hydroxylation of the alpha-carbon of L-Phe in cyclo-L-phenylalanyl-L-serine whereas the second cytochrome P450 enzyme, gliF, is presumably involved in the modification of the DKP side chain. The glutathione S-transferase (GST) gliG then forms a bis-glutathionylated biosynthetic intermediate which is responsible for the sulfurization of gliotoxin. This bis-glutathionylated intermediate is subsequently processed by the gamma-glutamyl cyclotransferase gliK to remove both gamma-glutamyl moieties. Subsequent processing via gliI yields a biosynthetic intermediate, which is N-methylated via the N-methyltransferase gliN, before the gliotoxin oxidoreductase gliT-mediated disulfide bridge closure. GliN-mediated amide methylation confers stability to ETP, damping the spontaneous formation of tri- and tetrasulfides. Intracellular dithiol gliotoxin oxidized by gliT is subsequently effluxed by gliA. Gliotoxin contributes to pathogenesis during invasive aspergillosis. In macrophages and neutrophils, gliotoxin showed inhibition of various different cell functions including cytokine production, antigen presentation, phagocytosis, and production of reactive oxygen species. The chain is Gamma-glutamyl cyclotransferase gliK from Aspergillus fumigatus (strain ATCC MYA-4609 / CBS 101355 / FGSC A1100 / Af293) (Neosartorya fumigata).